The chain runs to 418 residues: NADH-quinone oxidoreductase subunit D (418 aa).

It belongs to the complex I 49 kDa subunit family. NDH-1 is composed of 14 different subunits. Subunits NuoB, C, D, E, F, and G constitute the peripheral sector of the complex.

The protein localises to the cell inner membrane. The catalysed reaction is a quinone + NADH + 5 H(+)(in) = a quinol + NAD(+) + 4 H(+)(out). Its function is as follows. NDH-1 shuttles electrons from NADH, via FMN and iron-sulfur (Fe-S) centers, to quinones in the respiratory chain. The immediate electron acceptor for the enzyme in this species is believed to be ubiquinone. Couples the redox reaction to proton translocation (for every two electrons transferred, four hydrogen ions are translocated across the cytoplasmic membrane), and thus conserves the redox energy in a proton gradient. This Bordetella pertussis (strain Tohama I / ATCC BAA-589 / NCTC 13251) protein is NADH-quinone oxidoreductase subunit D.